Reading from the N-terminus, the 1488-residue chain is Chromosome partition protein MukB (1488 aa).

34–41 is a binding site for ATP; sequence GGNGAGKS. Coiled-coil stretches lie at residues 326–418, 444–472, and 509–602; these read LEAD…QYNQ, LDTF…QTAH, and RHLA…QRAP. The tract at residues 666–783 is flexible hinge; the sequence is PGGAEDQRLN…SLPIFGRAAR (118 aa). Coiled-coil stretches lie at residues 835–923, 977–1116, and 1209–1265; these read EAEI…AKLE, EMLS…AKAG, and VEAI…LQSV. Residues 1049–1074 form a disordered region; sequence ADSGAEERARQRRDELHAQLSNNRSR. Residues 1051 to 1065 are compositionally biased toward basic and acidic residues; it reads SGAEERARQRRDELH.

Belongs to the SMC family. MukB subfamily. Homodimerization via its hinge domain. Binds to DNA via its C-terminal region. Interacts, and probably forms a ternary complex, with MukE and MukF via its C-terminal region. The complex formation is stimulated by calcium or magnesium. Interacts with tubulin-related protein FtsZ.

Its subcellular location is the cytoplasm. It localises to the nucleoid. In terms of biological role, plays a central role in chromosome condensation, segregation and cell cycle progression. Functions as a homodimer, which is essential for chromosome partition. Involved in negative DNA supercoiling in vivo, and by this means organize and compact chromosomes. May achieve or facilitate chromosome segregation by condensation DNA from both sides of a centrally located replisome during cell division. In Salmonella paratyphi A (strain ATCC 9150 / SARB42), this protein is Chromosome partition protein MukB.